The primary structure comprises 632 residues: Chaperone protein HtpG (632 aa).

The segment at 1–339 (MAHETMSFQA…SADLPLNVSR (339 aa)) is a; substrate-binding. Residues 340-559 (EILQESRDVK…DNDMSGYLQR (220 aa)) form a b region. The c stretch occupies residues 560–632 (MLKAAGQNAP…TNALLLSRAA (73 aa)).

It belongs to the heat shock protein 90 family. In terms of assembly, homodimer.

It localises to the cytoplasm. Its function is as follows. Molecular chaperone. Has ATPase activity. In Burkholderia cenocepacia (strain HI2424), this protein is Chaperone protein HtpG.